The chain runs to 640 residues: Telomere repeat-binding protein 4 (640 aa).

Residues 343-422 form the Ubiquitin-like domain; sequence VKFSIKSLRI…LGNLGFTLEP (80 aa). Residues 442-464 form a disordered region; it reads TDSTKLSERSAASPALETGIPLP. The 60-residue stretch at 530-589 folds into the HTH myb-type domain; sequence SQRRTRRPFSVTEVEALVSAVEEVGTGRWRDVKLRSFENASHRTYVDLKDKWKTLVHTAS. A DNA-binding region (H-T-H motif) is located at residues 558 to 585; the sequence is WRDVKLRSFENASHRTYVDLKDKWKTLV.

As to quaternary structure, homomultimer. Interacts with SNL1 (via PAH2). Interacts with STO. Expressed ubiquitously. Highest expression in flowers and roots.

The protein localises to the nucleus. Functionally, binds specifically to the plant telomeric double-stranded DNA sequences 5'-TTTAGGG-3'. At least 2 repeats of telomeric sequences are required for binding. Induces DNA bending. This is Telomere repeat-binding protein 4 (TRP4) from Arabidopsis thaliana (Mouse-ear cress).